We begin with the raw amino-acid sequence, 449 residues long: Probable glycine dehydrogenase (decarboxylating) subunit 1 (449 aa).

It belongs to the GcvP family. N-terminal subunit subfamily. In terms of assembly, the glycine cleavage system is composed of four proteins: P, T, L and H. In this organism, the P 'protein' is a heterodimer of two subunits.

It catalyses the reaction N(6)-[(R)-lipoyl]-L-lysyl-[glycine-cleavage complex H protein] + glycine + H(+) = N(6)-[(R)-S(8)-aminomethyldihydrolipoyl]-L-lysyl-[glycine-cleavage complex H protein] + CO2. Its function is as follows. The glycine cleavage system catalyzes the degradation of glycine. The P protein binds the alpha-amino group of glycine through its pyridoxal phosphate cofactor; CO(2) is released and the remaining methylamine moiety is then transferred to the lipoamide cofactor of the H protein. This Oceanobacillus iheyensis (strain DSM 14371 / CIP 107618 / JCM 11309 / KCTC 3954 / HTE831) protein is Probable glycine dehydrogenase (decarboxylating) subunit 1.